A 508-amino-acid chain; its full sequence is Citrate lyase alpha chain (508 aa).

Oligomer with a subunit composition of (alpha,beta,gamma)6.

It is found in the cytoplasm. The enzyme catalyses citrate = oxaloacetate + acetate. It carries out the reaction citrate + acetyl-CoA = (3S)-citryl-CoA + acetate. Represents a citrate:acetyl-ACP transferase. The sequence is that of Citrate lyase alpha chain (citF) from Klebsiella pneumoniae.